The following is a 363-amino-acid chain: tRNA/tmRNA (uracil-C(5))-methyltransferase (363 aa).

Residues glutamine 187, tyrosine 215, asparagine 220, glutamate 236, and aspartate 296 each contribute to the S-adenosyl-L-methionine site. Cysteine 321 (nucleophile) is an active-site residue. The active-site Proton acceptor is glutamate 355.

It belongs to the class I-like SAM-binding methyltransferase superfamily. RNA M5U methyltransferase family. TrmA subfamily.

It carries out the reaction uridine(54) in tRNA + S-adenosyl-L-methionine = 5-methyluridine(54) in tRNA + S-adenosyl-L-homocysteine + H(+). The catalysed reaction is uridine(341) in tmRNA + S-adenosyl-L-methionine = 5-methyluridine(341) in tmRNA + S-adenosyl-L-homocysteine + H(+). Dual-specificity methyltransferase that catalyzes the formation of 5-methyluridine at position 54 (m5U54) in all tRNAs, and that of position 341 (m5U341) in tmRNA (transfer-mRNA). The protein is tRNA/tmRNA (uracil-C(5))-methyltransferase of Pseudomonas paraeruginosa (strain DSM 24068 / PA7) (Pseudomonas aeruginosa (strain PA7)).